We begin with the raw amino-acid sequence, 330 residues long: tRNA-modifying protein YgfZ (330 aa).

Residues W28 and W190 each contribute to the folate site.

Belongs to the tRNA-modifying YgfZ family.

The protein resides in the cytoplasm. In terms of biological role, folate-binding protein involved in regulating the level of ATP-DnaA and in the modification of some tRNAs. It is probably a key factor in regulatory networks that act via tRNA modification, such as initiation of chromosomal replication. This Yersinia pestis bv. Antiqua (strain Antiqua) protein is tRNA-modifying protein YgfZ.